We begin with the raw amino-acid sequence, 500 residues long: Protein gar2 (500 aa).

Composition is skewed to basic and acidic residues over residues M1 to A41 and K59 to K68. A disordered region spans residues M1–T262. Residues K69 to K78 are compositionally biased toward basic residues. Residues E90–S120 show a composition bias toward low complexity. Over residues V126–S137 the composition is skewed to basic and acidic residues. Phosphoserine is present on residues S143, S144, and S146. A compositionally biased stretch (basic and acidic residues) spans A152 to S163. The span at S164–S182 shows a compositional bias: low complexity. Residues V191–S201 are compositionally biased toward basic and acidic residues. The span at S202 to S218 shows a compositional bias: low complexity. The segment covering G219–S233 has biased composition (acidic residues). Over residues E234–A250 the composition is skewed to basic and acidic residues. RRM domains lie at C263–P341 and D366–P443. Residues S441 to D500 are disordered. Positions T445 to R480 are enriched in gly residues.

The protein belongs to the RRM GAR family.

The protein localises to the nucleus. The protein resides in the nucleolus. In terms of biological role, helps the assembly of pre-ribosomal particles containing 18S rRNA. In Schizosaccharomyces pombe (strain 972 / ATCC 24843) (Fission yeast), this protein is Protein gar2 (gar2).